Consider the following 24-residue polypeptide: Acidic phospholipase A2 4 (24 aa).

The protein belongs to the phospholipase A2 family. Group II subfamily. The cofactor is Ca(2+). Expressed by the venom gland.

It is found in the secreted. It carries out the reaction a 1,2-diacyl-sn-glycero-3-phosphocholine + H2O = a 1-acyl-sn-glycero-3-phosphocholine + a fatty acid + H(+). In terms of biological role, PLA2 catalyzes the calcium-dependent hydrolysis of the 2-acyl groups in 3-sn-phosphoglycerides. The chain is Acidic phospholipase A2 4 from Trimeresurus stejnegeri (Chinese green tree viper).